Reading from the N-terminus, the 1534-residue chain is DNA-directed RNA polymerase subunit beta'' (1534 aa).

Cysteine 220, cysteine 296, cysteine 303, and cysteine 306 together coordinate Zn(2+). Composition is skewed to basic and acidic residues over residues 644–668 (RTQEEEYRTREEEYRTREEEYRTRE) and 678–688 (PENKYRTREGE). 2 disordered regions span residues 644–698 (RTQE…EDEY) and 719–800 (YRTL…KKEG). 2 stretches are compositionally biased toward acidic residues: residues 744 to 762 (GEYEILEEDSEEEYGSSED) and 770 to 789 (TLEEDSEEDSEEDSEDEYGS).

Belongs to the RNA polymerase beta' chain family. RpoC2 subfamily. As to quaternary structure, in plastids the minimal PEP RNA polymerase catalytic core is composed of four subunits: alpha, beta, beta', and beta''. When a (nuclear-encoded) sigma factor is associated with the core the holoenzyme is formed, which can initiate transcription. Zn(2+) serves as cofactor.

It is found in the plastid. It localises to the chloroplast. The enzyme catalyses RNA(n) + a ribonucleoside 5'-triphosphate = RNA(n+1) + diphosphate. DNA-dependent RNA polymerase catalyzes the transcription of DNA into RNA using the four ribonucleoside triphosphates as substrates. In Saccharum officinarum (Sugarcane), this protein is DNA-directed RNA polymerase subunit beta''.